The primary structure comprises 683 residues: U4/U6 small nuclear ribonucleoprotein Prp3 (683 aa).

A PWI domain is found at 1-87 (MALSKRELDE…HSKSSSDRSR (87 aa)). Residues 73-107 (GRSSRHSKSSSDRSRKRELKEVFGDDSEISKESSG) show a composition bias toward basic and acidic residues. The tract at residues 73–135 (GRSSRHSKSS…IPGPPSESPG (63 aa)) is disordered. Residue K139 forms a Glycyl lysine isopeptide (Lys-Gly) (interchain with G-Cter in SUMO2) linkage. The interval 153–183 (IEERKKQLSFISPPTPQPKTPSSSQPERLPI) is disordered. S164 is subject to Phosphoserine. A Phosphothreonine modification is found at T167. Glycyl lysine isopeptide (Lys-Gly) (interchain with G-Cter in SUMO2) cross-links involve residues K244 and K252. A mediates interaction with SART3 region spans residues 416 to 550 (NLVEHPAQLN…VHISVYRVRN (135 aa)). S619 bears the Phosphoserine mark.

Component of the precatalytic spliceosome (spliceosome B complex). Component of the U4/U6-U5 tri-snRNP complex, a building block of the precatalytic spliceosome (spliceosome B complex). The U4/U6-U5 tri-snRNP complex is composed of the U4, U6 and U5 snRNAs and at least PRPF3, PRPF4, PRPF6, PRPF8, PRPF31, SNRNP200, TXNL4A, SNRNP40, SNRPB, SNRPD1, SNRPD2, SNRPD3, SNRPE, SNRPF, SNRPG, DDX23, CD2BP2, PPIH, SNU13, EFTUD2, SART1 and USP39, plus LSM2, LSM3, LSM4, LSM5, LSM6, LSM7 and LSM8. Interacts directly with PRPF4. Part of a heteromeric complex containing PPIH, PRPF3 and PRPF4 that is stable in the absence of RNA. Interacts with SART3; the interaction is direct and recruits the deubiquitinase USP4 to PRPF3. Interacts with PRPF19. Interacts ('Lys-63'-linked polyubiquitinated) with PRPF8 (via the MPN (JAB/Mov34) domain); may stabilize the U4/U6-U5 tri-snRNP complex. Interacts with ERCC6. Post-translationally, ubiquitinated. Undergoes 'Lys-63'-linked polyubiquitination by PRPF19 and deubiquitination by USP4. 'Lys-63'-linked ubiquitination increases the affinity for PRPF8 and may regulate the assembly of the U4/U6-U5 tri-snRNP complex.

The protein resides in the nucleus. It is found in the nucleus speckle. Functionally, plays a role in pre-mRNA splicing as component of the U4/U6-U5 tri-snRNP complex that is involved in spliceosome assembly, and as component of the precatalytic spliceosome (spliceosome B complex). In Pongo abelii (Sumatran orangutan), this protein is U4/U6 small nuclear ribonucleoprotein Prp3 (PRPF3).